The chain runs to 273 residues: Large ribosomal subunit protein uL2c (273 aa).

The segment covering 1–31 (MAIHLSKTSSPSTRNGAVNSQVKSNSRNRLI) has biased composition (polar residues). Disordered stretches follow at residues 1-53 (MAIH…GHRG) and 222-273 (MNPV…RRSK).

This sequence belongs to the universal ribosomal protein uL2 family. As to quaternary structure, part of the 50S ribosomal subunit.

The protein resides in the plastid. It localises to the chloroplast. This Pisum sativum (Garden pea) protein is Large ribosomal subunit protein uL2c (rpl2).